We begin with the raw amino-acid sequence, 378 residues long: Enoyl-[acyl-carrier-protein] reductase 1, mitochondrial (378 aa).

Y59 (proton donor) is an active-site residue. NADP(+) contacts are provided by residues N151, 180–183, 203–206, 284–287, 309–311, and K372; these read NSQV, RDGK, YGGM, and YWL.

The protein belongs to the zinc-containing alcohol dehydrogenase family. Quinone oxidoreductase subfamily. As to quaternary structure, homodimer.

It is found in the mitochondrion matrix. It catalyses the reaction a 2,3-saturated acyl-[ACP] + NADP(+) = a (2E)-enoyl-[ACP] + NADPH + H(+). Catalyzes the NADPH-dependent reduction of trans-2-enoyl thioesters in mitochondrial fatty acid synthesis (fatty acid synthesis type II). Fatty acid chain elongation in mitochondria uses acyl carrier protein (ACP) as an acyl group carrier, but the enzyme accepts both ACP and CoA thioesters as substrates in vitro. Required for respiration and the maintenance of the mitochondrial compartment. The sequence is that of Enoyl-[acyl-carrier-protein] reductase 1, mitochondrial (ETR1) from Debaryomyces hansenii (strain ATCC 36239 / CBS 767 / BCRC 21394 / JCM 1990 / NBRC 0083 / IGC 2968) (Yeast).